A 130-amino-acid polypeptide reads, in one-letter code: Protein ApaG (130 aa).

In terms of domain architecture, ApaG spans 3–127; the sequence is RAVTRQIEVT…FSLDSPDNKR (125 aa).

The polypeptide is Protein ApaG (Bradyrhizobium diazoefficiens (strain JCM 10833 / BCRC 13528 / IAM 13628 / NBRC 14792 / USDA 110)).